The sequence spans 141 residues: Large ribosomal subunit protein uL11 (141 aa).

This sequence belongs to the universal ribosomal protein uL11 family. Part of the ribosomal stalk of the 50S ribosomal subunit. Interacts with L10 and the large rRNA to form the base of the stalk. L10 forms an elongated spine to which L12 dimers bind in a sequential fashion forming a multimeric L10(L12)X complex. One or more lysine residues are methylated.

Functionally, forms part of the ribosomal stalk which helps the ribosome interact with GTP-bound translation factors. This chain is Large ribosomal subunit protein uL11, found in Wolinella succinogenes (strain ATCC 29543 / DSM 1740 / CCUG 13145 / JCM 31913 / LMG 7466 / NCTC 11488 / FDC 602W) (Vibrio succinogenes).